A 303-amino-acid polypeptide reads, in one-letter code: Mitochondrial carrier homolog 2 (303 aa).

Residue Ala2 is modified to N-acetylalanine. The Mitochondrial intermembrane segment spans residues 2 to 15 (ADAASQVLLGSGLT). Solcar repeat units follow at residues 2-98 (ADAA…YQEC) and 118-206 (DRVI…VNTY). A helical transmembrane segment spans residues 16 to 36 (ILSQPLMYVKVLIQVGYEPLA). The Cytoplasmic portion of the chain corresponds to 37–77 (PTVGRNIFGRQVCQLPGLFCYAQHIASIDGKRGLFTGLTPR). A helical transmembrane segment spans residues 78–92 (LCSGVLGTVVHGKVL). The Mitochondrial intermembrane segment spans residues 93–135 (QHYQECDKAEESGSGNVQKEVSSSFDRVIKETTREMMARSAAT). The chain crosses the membrane as a helical span at residues 136–156 (LITHPFHVITLRSMVQFIGRE). Residues 157-180 (SKYCGLCDSIATIYREEGILGFFA) lie on the Cytoplasmic side of the membrane. Residues 181-199 (GLIPRLLGDIISLWLCNSL) traverse the membrane as a helical segment. Residues 200 to 231 (AYLVNTYALDSGVSTMNEMKSYSQAVTGFFAS) are Mitochondrial intermembrane-facing. A helical transmembrane segment spans residues 232–252 (MLTYPFVLVSNLMAVNNCGLA). Residues 253–280 (GGCPPYAPIYSSWIDCWCMLQKEGNMSR) lie on the Cytoplasmic side of the membrane. A helical membrane pass occupies residues 281–303 (GNSLFFRKVPFGKTYCCDLRMLI).

The protein belongs to the mitochondrial carrier (TC 2.A.29) family. In terms of assembly, interacts with p15BID.

It is found in the mitochondrion outer membrane. Functionally, protein insertase that mediates insertion of transmembrane proteins into the mitochondrial outer membrane. Catalyzes insertion of proteins with alpha-helical transmembrane regions, such as signal-anchored, tail-anchored and multi-pass membrane proteins. Does not mediate insertion of beta-barrel transmembrane proteins. Also acts as a receptor for the truncated form of pro-apoptotic BH3-interacting domain death agonist (p15 BID) and has therefore a critical function in apoptosis. Regulates the quiescence/cycling of hematopoietic stem cells (HSCs). Acts as a regulator of mitochondrial fusion, essential for the naive-to-primed interconversion of embryonic stem cells (ESCs). Acts as a regulator of lipid homeostasis and has a regulatory role in adipocyte differentiation and biology. In Bos taurus (Bovine), this protein is Mitochondrial carrier homolog 2 (MTCH2).